Reading from the N-terminus, the 528-residue chain is MSTVNVQIGLHELLNGSNAQIQLSVPQLVEKVLMRNEGKLTSTGAVSASTGKYTGRSPKDKFIVKEPSVANKIAWGPVNQPISEERFNKLYTKVLEYLKEKEELFVFKGFAGADRNYRLPIQVVNEYAWHNLFVHQLFIRPTEEELANHNAPFTIVSAPNFKADPAVDGTNSEAFIIVSFEKRIVLIGGTEYAGEMKKSIFSIMNFLLPEQDILSMHCSANVGEEGDVALFFGLSGTGKTTLSADPHRKLIGDDEHGWSDNGVFNIEGGCYAKCINLSHEKEPQIFDAIKFGSVLENVIVDDKTRIADYSDTALTENTRAAYPIDAIDNIVLPSVAGHPNTIIFLTADASGVLPPISKLSKEQAMYHFLSGYTSKLAGTERGVTSPQATFSTCFGSPFLPLDASRYAEMLGEKIEKHDAKVFLVNTGWTGGEYGVGKRMNLAYTRAMVQAALNGELDKVETVKHDIFGLDVPLHVPSVPDEVLMPEQTWADQAAYKQKAIELANQFKENFKKFDNVSKDIINLGGPTA.

Substrate-binding residues include arginine 56, tyrosine 192, and lysine 198. Residues lysine 198, histidine 217, and 233-241 each bind ATP; that span reads GLSGTGKTT. 2 residues coordinate Mn(2+): lysine 198 and histidine 217. A Mn(2+)-binding site is contributed by aspartate 254. ATP-binding residues include glutamate 282, arginine 319, and threonine 444. A substrate-binding site is contributed by arginine 319.

Belongs to the phosphoenolpyruvate carboxykinase (ATP) family. Mn(2+) serves as cofactor.

Its subcellular location is the cytoplasm. It catalyses the reaction oxaloacetate + ATP = phosphoenolpyruvate + ADP + CO2. The protein operates within carbohydrate biosynthesis; gluconeogenesis. In terms of biological role, involved in the gluconeogenesis. Catalyzes the conversion of oxaloacetate (OAA) to phosphoenolpyruvate (PEP) through direct phosphoryl transfer between the nucleoside triphosphate and OAA. The protein is Phosphoenolpyruvate carboxykinase (ATP) of Bacillus cytotoxicus (strain DSM 22905 / CIP 110041 / 391-98 / NVH 391-98).